A 293-amino-acid chain; its full sequence is MPWIQLRINTNSDDAETISDLLMEEGAVSITFEDGKDTPIFEPKLGETPLWQDTVVVALFEADTDLAPTIEMLKTLPFLGEHFSHKIEQIEDKDWVREWMDNYHPIQFGKRLWICPSWREVPDPSAVNVILDPGLAFGTGTHPTTALCLEWLDSLDLSNEEVIDFGCGSGILAVAALKLGAKKVTGIDIDYQAIEASKANAERNDVADQLALYLPEDQPADLKADVLVANILAGPLRELAPLIAERVKSGGKLALSGLLKEQAQEISDFYSQWFDMDEAAHKEDWSRLTGKRK.

T145, G166, D188, and N230 together coordinate S-adenosyl-L-methionine.

Belongs to the methyltransferase superfamily. PrmA family.

It localises to the cytoplasm. The enzyme catalyses L-lysyl-[protein] + 3 S-adenosyl-L-methionine = N(6),N(6),N(6)-trimethyl-L-lysyl-[protein] + 3 S-adenosyl-L-homocysteine + 3 H(+). Its function is as follows. Methylates ribosomal protein L11. The sequence is that of Ribosomal protein L11 methyltransferase from Shewanella sp. (strain ANA-3).